A 503-amino-acid polypeptide reads, in one-letter code: ATP synthase subunit alpha (503 aa).

An ATP-binding site is contributed by 170–177 (GDRKTGKT).

This sequence belongs to the ATPase alpha/beta chains family. As to quaternary structure, F-type ATPases have 2 components, CF(1) - the catalytic core - and CF(0) - the membrane proton channel. CF(1) has five subunits: alpha(3), beta(3), gamma(1), delta(1), epsilon(1). CF(0) has four main subunits: a, b, b' and c.

The protein localises to the cellular thylakoid membrane. It catalyses the reaction ATP + H2O + 4 H(+)(in) = ADP + phosphate + 5 H(+)(out). Functionally, produces ATP from ADP in the presence of a proton gradient across the membrane. The alpha chain is a regulatory subunit. The sequence is that of ATP synthase subunit alpha from Gloeothece citriformis (strain PCC 7424) (Cyanothece sp. (strain PCC 7424)).